Reading from the N-terminus, the 231-residue chain is Red fluorescent protein eqFP611 (231 aa).

Residues 63–65 (MYG) constitute a cross-link (2-iminomethyl-5-imidazolinone (Met-Gly)). Residue tyrosine 64 is modified to (E)-2,3-didehydrotyrosine.

It belongs to the GFP family. In terms of assembly, monomer. Post-translationally, contains a chromophore consisting of modified amino acid residues. The chromophore is formed by autocatalytic backbone condensation between Xaa-N and Gly-(N+2), oxidation of Tyr-(N+1) to didehydrotyrosine, and formation of a double bond to the alpha-amino nitrogen of residue Xaa-N. Maturation of the chromophore requires nothing other than molecular oxygen.

Pigment protein. The chain is Red fluorescent protein eqFP611 from Entacmaea quadricolor (Bubble-tip anemone).